The primary structure comprises 474 residues: Glutamate--tRNA ligase (474 aa).

The 'HIGH' region motif lies at 18 to 28 (PSPTGFLHIGG). The short motif at 244 to 248 (KLSKR) is the 'KMSKS' region element. K247 is an ATP binding site.

The protein belongs to the class-I aminoacyl-tRNA synthetase family. Glutamate--tRNA ligase type 1 subfamily. In terms of assembly, monomer.

It is found in the cytoplasm. The enzyme catalyses tRNA(Glu) + L-glutamate + ATP = L-glutamyl-tRNA(Glu) + AMP + diphosphate. Functionally, catalyzes the attachment of glutamate to tRNA(Glu) in a two-step reaction: glutamate is first activated by ATP to form Glu-AMP and then transferred to the acceptor end of tRNA(Glu). This is Glutamate--tRNA ligase from Caulobacter sp. (strain K31).